Reading from the N-terminus, the 201-residue chain is Kunitz type trypsin inhibitor 104 (201 aa).

The signal sequence occupies residues 1-24 (MSTRSLTIFILAHVWLLMATTSIA). Disulfide bonds link cysteine 63-cysteine 110, cysteine 161-cysteine 173, and cysteine 166-cysteine 169.

This sequence belongs to the protease inhibitor I3 (leguminous Kunitz-type inhibitor) family. Interacts with CP.

Its subcellular location is the secreted. It is found in the extracellular space. The protein resides in the apoplast. Functionally, protease inhibitor involved in the control of mycorrhiza establishment and arbuscule development during root colonization by arbuscular mycorrhizal (AM) fungi (e.g. Rhizophagus irregularis). This Medicago truncatula (Barrel medic) protein is Kunitz type trypsin inhibitor 104.